A 126-amino-acid polypeptide reads, in one-letter code: Large ribosomal subunit protein bL12 (126 aa).

The protein belongs to the bacterial ribosomal protein bL12 family. In terms of assembly, homodimer. Part of the ribosomal stalk of the 50S ribosomal subunit. Forms a multimeric L10(L12)X complex, where L10 forms an elongated spine to which 2 to 4 L12 dimers bind in a sequential fashion. Binds GTP-bound translation factors.

In terms of biological role, forms part of the ribosomal stalk which helps the ribosome interact with GTP-bound translation factors. Is thus essential for accurate translation. This chain is Large ribosomal subunit protein bL12, found in Coxiella burnetii (strain CbuK_Q154) (Coxiella burnetii (strain Q154)).